Consider the following 480-residue polypeptide: Glutamate--tRNA ligase (480 aa).

The 'HIGH' region motif lies at 21-31; the sequence is PSPTGYLHVGG. Zn(2+) is bound by residues C110, C112, C137, and H139. The short motif at 248–252 is the 'KMSKS' region element; that stretch reads KLSKR. K251 is a binding site for ATP.

Belongs to the class-I aminoacyl-tRNA synthetase family. Glutamate--tRNA ligase type 1 subfamily. As to quaternary structure, monomer. It depends on Zn(2+) as a cofactor.

It localises to the cytoplasm. The catalysed reaction is tRNA(Glu) + L-glutamate + ATP = L-glutamyl-tRNA(Glu) + AMP + diphosphate. Its function is as follows. Catalyzes the attachment of glutamate to tRNA(Glu) in a two-step reaction: glutamate is first activated by ATP to form Glu-AMP and then transferred to the acceptor end of tRNA(Glu). The protein is Glutamate--tRNA ligase of Mannheimia succiniciproducens (strain KCTC 0769BP / MBEL55E).